Here is a 471-residue protein sequence, read N- to C-terminus: Eukaryotic translation initiation factor 3 subunit L (471 aa).

The 195-residue stretch at 252–446 folds into the PCI domain; that stretch reads DAIRMFSHIL…DLDYAMQGDL (195 aa).

Belongs to the eIF-3 subunit L family.

Its subcellular location is the cytoplasm. Functionally, component of the eukaryotic translation initiation factor 3 (eIF-3) complex, which is involved in protein synthesis of a specialized repertoire of mRNAs and, together with other initiation factors, stimulates binding of mRNA and methionyl-tRNAi to the 40S ribosome. The eIF-3 complex specifically targets and initiates translation of a subset of mRNAs involved in cell proliferation. The polypeptide is Eukaryotic translation initiation factor 3 subunit L (Pyricularia oryzae (strain Y34) (Rice blast fungus)).